The chain runs to 374 residues: Flap endonuclease 1 (374 aa).

Residues 1-105 (MGVKGLNQLI…GELEKRMIRK (105 aa)) form an N-domain region. Asp-34 is a binding site for Mg(2+). Arg-47 and Arg-71 together coordinate DNA. 5 residues coordinate Mg(2+): Asp-87, Glu-159, Glu-161, Asp-180, and Asp-182. The segment at 123 to 254 (EMVRYEKRSV…VTAFKLIKEH (132 aa)) is I-domain. DNA is bound at residue Glu-159. DNA-binding residues include Gly-232 and Asp-234. Asp-234 lines the Mg(2+) pocket. The interval 341-349 (VQGRLDGFF) is interaction with PCNA. The span at 354 to 365 (TEKRKPEQDKKT) shows a compositional bias: basic and acidic residues. Residues 354 to 374 (TEKRKPEQDKKTKGSKKAKKK) form a disordered region.

Belongs to the XPG/RAD2 endonuclease family. FEN1 subfamily. As to quaternary structure, interacts with PCNA. Three molecules of FEN1 bind to one PCNA trimer with each molecule binding to one PCNA monomer. PCNA stimulates the nuclease activity without altering cleavage specificity. The cofactor is Mg(2+). In terms of processing, phosphorylated. Phosphorylation upon DNA damage induces relocalization to the nuclear plasma.

Its subcellular location is the nucleus. The protein localises to the nucleolus. It is found in the nucleoplasm. It localises to the mitochondrion. In terms of biological role, structure-specific nuclease with 5'-flap endonuclease and 5'-3' exonuclease activities involved in DNA replication and repair. During DNA replication, cleaves the 5'-overhanging flap structure that is generated by displacement synthesis when DNA polymerase encounters the 5'-end of a downstream Okazaki fragment. It enters the flap from the 5'-end and then tracks to cleave the flap base, leaving a nick for ligation. Also involved in the long patch base excision repair (LP-BER) pathway, by cleaving within the apurinic/apyrimidinic (AP) site-terminated flap. Acts as a genome stabilization factor that prevents flaps from equilibrating into structures that lead to duplications and deletions. Also possesses 5'-3' exonuclease activity on nicked or gapped double-stranded DNA, and exhibits RNase H activity. Also involved in replication and repair of rDNA and in repairing mitochondrial DNA. The chain is Flap endonuclease 1 from Meyerozyma guilliermondii (strain ATCC 6260 / CBS 566 / DSM 6381 / JCM 1539 / NBRC 10279 / NRRL Y-324) (Yeast).